We begin with the raw amino-acid sequence, 226 residues long: Enolase-phosphatase E1 (226 aa).

The protein belongs to the HAD-like hydrolase superfamily. MasA/MtnC family. Monomer. The cofactor is Mg(2+).

The enzyme catalyses 5-methylsulfanyl-2,3-dioxopentyl phosphate + H2O = 1,2-dihydroxy-5-(methylsulfanyl)pent-1-en-3-one + phosphate. It participates in amino-acid biosynthesis; L-methionine biosynthesis via salvage pathway; L-methionine from S-methyl-5-thio-alpha-D-ribose 1-phosphate: step 3/6. Its pathway is amino-acid biosynthesis; L-methionine biosynthesis via salvage pathway; L-methionine from S-methyl-5-thio-alpha-D-ribose 1-phosphate: step 4/6. In terms of biological role, bifunctional enzyme that catalyzes the enolization of 2,3-diketo-5-methylthiopentyl-1-phosphate (DK-MTP-1-P) into the intermediate 2-hydroxy-3-keto-5-methylthiopentenyl-1-phosphate (HK-MTPenyl-1-P), which is then dephosphorylated to form the acireductone 1,2-dihydroxy-3-keto-5-methylthiopentene (DHK-MTPene). This is Enolase-phosphatase E1 from Alcanivorax borkumensis (strain ATCC 700651 / DSM 11573 / NCIMB 13689 / SK2).